Consider the following 415-residue polypeptide: Phosphoglycerate kinase (415 aa).

Residues 28 to 30 (DLN), arginine 44, 67 to 70 (HQGR), arginine 124, and arginine 164 each bind substrate. ATP contacts are provided by residues glutamate 336 and 362–365 (GGHF).

Belongs to the phosphoglycerate kinase family.

The protein resides in the cytoplasm. It carries out the reaction (2R)-3-phosphoglycerate + ATP = (2R)-3-phospho-glyceroyl phosphate + ADP. It functions in the pathway carbohydrate degradation; glycolysis; pyruvate from D-glyceraldehyde 3-phosphate: step 2/5. This chain is Phosphoglycerate kinase (pgk), found in Aeropyrum pernix (strain ATCC 700893 / DSM 11879 / JCM 9820 / NBRC 100138 / K1).